Reading from the N-terminus, the 120-residue chain is NAD(P)H-quinone oxidoreductase subunit 3, chloroplastic (120 aa).

3 helical membrane-spanning segments follow: residues 9–29, 64–84, and 88–108; these read IFWA…LISG, MFAL…PWAM, and VLGV…IVGS.

The protein belongs to the complex I subunit 3 family. As to quaternary structure, NDH is composed of at least 16 different subunits, 5 of which are encoded in the nucleus.

The protein resides in the plastid. It localises to the chloroplast thylakoid membrane. The catalysed reaction is a plastoquinone + NADH + (n+1) H(+)(in) = a plastoquinol + NAD(+) + n H(+)(out). It carries out the reaction a plastoquinone + NADPH + (n+1) H(+)(in) = a plastoquinol + NADP(+) + n H(+)(out). Its function is as follows. NDH shuttles electrons from NAD(P)H:plastoquinone, via FMN and iron-sulfur (Fe-S) centers, to quinones in the photosynthetic chain and possibly in a chloroplast respiratory chain. The immediate electron acceptor for the enzyme in this species is believed to be plastoquinone. Couples the redox reaction to proton translocation, and thus conserves the redox energy in a proton gradient. The polypeptide is NAD(P)H-quinone oxidoreductase subunit 3, chloroplastic (Platanus occidentalis (Sycamore)).